We begin with the raw amino-acid sequence, 89 residues long: Small ribosomal subunit protein uS15 (89 aa).

The protein belongs to the universal ribosomal protein uS15 family. As to quaternary structure, part of the 30S ribosomal subunit. Forms a bridge to the 50S subunit in the 70S ribosome, contacting the 23S rRNA.

Its function is as follows. One of the primary rRNA binding proteins, it binds directly to 16S rRNA where it helps nucleate assembly of the platform of the 30S subunit by binding and bridging several RNA helices of the 16S rRNA. Forms an intersubunit bridge (bridge B4) with the 23S rRNA of the 50S subunit in the ribosome. This Caulobacter sp. (strain K31) protein is Small ribosomal subunit protein uS15.